The chain runs to 346 residues: Bifunctional phosphatase IMPL2, chloroplastic (346 aa).

Residues 1–61 (MLAQSHFFSK…VSRRRFCLTM (61 aa)) constitute a chloroplast transit peptide. Positions 147, 165, and 168 each coordinate Mg(2+). Residue Glu-147 coordinates substrate. Substrate is bound by residues 167–170 (IDGT), 263–265 (GCD), Glu-282, and Asp-289. Asp-289 contacts Mg(2+).

The protein belongs to the inositol monophosphatase superfamily. It depends on Mg(2+) as a cofactor. Ubiquitous. High expression in roots. Expressed in pistil and seed endosperm.

It localises to the plastid. It is found in the chloroplast. It catalyses the reaction a myo-inositol phosphate + H2O = myo-inositol + phosphate. It carries out the reaction L-histidinol phosphate + H2O = L-histidinol + phosphate. The enzyme catalyses beta-L-galactose 1-phosphate + H2O = L-galactose + phosphate. It functions in the pathway amino-acid biosynthesis; L-histidine biosynthesis; L-histidine from 5-phospho-alpha-D-ribose 1-diphosphate: step 8/9. It participates in polyol metabolism; myo-inositol biosynthesis; myo-inositol from D-glucose 6-phosphate: step 2/2. Its function is as follows. Phosphatase required for histidine production. Also acts on L-galactose 1-phosphate (L-Gal 1-P), D-myoinositol 3-phosphate (D-Ins 3-P) and D-myoinositol 1-phosphate (D-Ins 1-P). The chain is Bifunctional phosphatase IMPL2, chloroplastic (HISN7) from Arabidopsis thaliana (Mouse-ear cress).